The following is a 1037-amino-acid chain: Caspase recruitment domain-containing protein 6 (1037 aa).

Position 2 is an N-acetylalanine (alanine 2). One can recognise a CARD domain in the interval 3-94 (TESTPSEIIE…QSAAICGLRH (92 aa)). Position 154 is a phosphoserine (serine 154). Disordered regions lie at residues 235 to 270 (DPEHVGYDGEEDFENSETTEFSGEEPSYEGSETSLS), 669 to 704 (VSSGENMAGTAEGEGQQRHSQLKSSSKSQALMPIQE), and 887 to 1037 (RTSH…GGKH). Acidic residues predominate over residues 242–261 (DGEEDFENSETTEFSGEEPS). A compositionally biased stretch (low complexity) spans 690 to 699 (LKSSSKSQAL). Polar residues-rich tracts occupy residues 911 to 928 (ASQQGVQMKTQGGASNPA), 938 to 954 (KSSQFKSDQSNPSTVKH), and 963 to 984 (VPSQPKSSQTKSCQSQPSQTKP). Serine 985 bears the Phosphoserine mark. Over residues 994–1012 (PSQPWPPQSKPSQPRPPQP) the composition is skewed to pro residues. Over residues 1023–1037 (KAHHSKAGQKRGGKH) the composition is skewed to basic residues.

Its function is as follows. May be involved in apoptosis. In Homo sapiens (Human), this protein is Caspase recruitment domain-containing protein 6 (CARD6).